The sequence spans 215 residues: Holliday junction branch migration complex subunit RuvA (215 aa).

The interval 1 to 67 (MIGWLQGERI…DDGSTLFGFC (67 aa)) is domain I. The domain II stretch occupies residues 68–146 (DQQERDLFRT…NWAPLQEPSL (79 aa)). The interval 147–158 (SLVDRSDVKAIP) is flexible linker. The domain III stretch occupies residues 159-215 (LGEPCLRDLQITLETLGYEDLEIRRAMRAVASGPDVPAEDDGDAWLRASLKWLSQSA).

The protein belongs to the RuvA family. Homotetramer. Forms an RuvA(8)-RuvB(12)-Holliday junction (HJ) complex. HJ DNA is sandwiched between 2 RuvA tetramers; dsDNA enters through RuvA and exits via RuvB. An RuvB hexamer assembles on each DNA strand where it exits the tetramer. Each RuvB hexamer is contacted by two RuvA subunits (via domain III) on 2 adjacent RuvB subunits; this complex drives branch migration. In the full resolvosome a probable DNA-RuvA(4)-RuvB(12)-RuvC(2) complex forms which resolves the HJ.

Its subcellular location is the cytoplasm. In terms of biological role, the RuvA-RuvB-RuvC complex processes Holliday junction (HJ) DNA during genetic recombination and DNA repair, while the RuvA-RuvB complex plays an important role in the rescue of blocked DNA replication forks via replication fork reversal (RFR). RuvA specifically binds to HJ cruciform DNA, conferring on it an open structure. The RuvB hexamer acts as an ATP-dependent pump, pulling dsDNA into and through the RuvAB complex. HJ branch migration allows RuvC to scan DNA until it finds its consensus sequence, where it cleaves and resolves the cruciform DNA. In Synechococcus sp. (strain WH7803), this protein is Holliday junction branch migration complex subunit RuvA.